A 328-amino-acid chain; its full sequence is Methionine import ATP-binding protein MetN 1 (328 aa).

Residues Ile2 to Leu241 form the ABC transporter domain. An ATP-binding site is contributed by Gly38–Ser45.

It belongs to the ABC transporter superfamily. Methionine importer (TC 3.A.1.24) family. In terms of assembly, the complex is composed of two ATP-binding proteins (MetN), two transmembrane proteins (MetI) and a solute-binding protein (MetQ).

The protein resides in the cell inner membrane. The enzyme catalyses L-methionine(out) + ATP + H2O = L-methionine(in) + ADP + phosphate + H(+). The catalysed reaction is D-methionine(out) + ATP + H2O = D-methionine(in) + ADP + phosphate + H(+). Its function is as follows. Part of the ABC transporter complex MetNIQ involved in methionine import. Responsible for energy coupling to the transport system. The polypeptide is Methionine import ATP-binding protein MetN 1 (Yersinia pestis bv. Antiqua (strain Nepal516)).